A 235-amino-acid polypeptide reads, in one-letter code: Aspartate/glutamate leucyltransferase (235 aa).

The protein belongs to the R-transferase family. Bpt subfamily.

The protein resides in the cytoplasm. It carries out the reaction N-terminal L-glutamyl-[protein] + L-leucyl-tRNA(Leu) = N-terminal L-leucyl-L-glutamyl-[protein] + tRNA(Leu) + H(+). The enzyme catalyses N-terminal L-aspartyl-[protein] + L-leucyl-tRNA(Leu) = N-terminal L-leucyl-L-aspartyl-[protein] + tRNA(Leu) + H(+). Functionally, functions in the N-end rule pathway of protein degradation where it conjugates Leu from its aminoacyl-tRNA to the N-termini of proteins containing an N-terminal aspartate or glutamate. The chain is Aspartate/glutamate leucyltransferase from Pseudomonas paraeruginosa (strain DSM 24068 / PA7) (Pseudomonas aeruginosa (strain PA7)).